A 394-amino-acid polypeptide reads, in one-letter code: Bone morphogenetic protein 15 (394 aa).

The first 18 residues, 1 to 18, serve as a signal peptide directing secretion; it reads MVLLSILRILLLWGLVLF. Positions 19-269 are excised as a propeptide; it reads MEHRVQMTQV…DPSLLLRRAR (251 aa). Asparagine 87 and asparagine 238 each carry an N-linked (GlcNAc...) asparagine glycan. Disulfide bonds link cysteine 293–cysteine 359, cysteine 322–cysteine 391, and cysteine 326–cysteine 393. N-linked (GlcNAc...) asparagine glycosylation occurs at asparagine 375.

This sequence belongs to the TGF-beta family. Homodimer or heterodimer (Potential). But, in contrast to other members of this family, cannot be disulfide-linked.

The protein resides in the secreted. May be involved in follicular development. Seems to be an oocyte-specific growth/differentiation factor that stimulates folliculogenesis and granulosa cell (GC) growth. The chain is Bone morphogenetic protein 15 (BMP15) from Bos taurus (Bovine).